The chain runs to 316 residues: Thymidylate synthase (316 aa).

DUMP contacts are provided by residues Arg23 and 178 to 179 (RR). Cys198 acts as the Nucleophile in catalysis. Residues 218–221 (RSGD), Asn229, and 259–261 (HIY) each bind dUMP. Asp221 is a binding site for (6R)-5,10-methylene-5,6,7,8-tetrahydrofolate. Ala315 is a binding site for (6R)-5,10-methylene-5,6,7,8-tetrahydrofolate.

Belongs to the thymidylate synthase family. Bacterial-type ThyA subfamily. Homodimer.

Its subcellular location is the cytoplasm. It carries out the reaction dUMP + (6R)-5,10-methylene-5,6,7,8-tetrahydrofolate = 7,8-dihydrofolate + dTMP. It functions in the pathway pyrimidine metabolism; dTTP biosynthesis. Functionally, catalyzes the reductive methylation of 2'-deoxyuridine-5'-monophosphate (dUMP) to 2'-deoxythymidine-5'-monophosphate (dTMP) while utilizing 5,10-methylenetetrahydrofolate (mTHF) as the methyl donor and reductant in the reaction, yielding dihydrofolate (DHF) as a by-product. This enzymatic reaction provides an intracellular de novo source of dTMP, an essential precursor for DNA biosynthesis. In Lactiplantibacillus plantarum (strain ATCC BAA-793 / NCIMB 8826 / WCFS1) (Lactobacillus plantarum), this protein is Thymidylate synthase.